Reading from the N-terminus, the 121-residue chain is Large ribosomal subunit protein bL12 (121 aa).

This sequence belongs to the bacterial ribosomal protein bL12 family. As to quaternary structure, homodimer. Part of the ribosomal stalk of the 50S ribosomal subunit. Forms a multimeric L10(L12)X complex, where L10 forms an elongated spine to which 2 to 4 L12 dimers bind in a sequential fashion. Binds GTP-bound translation factors.

Its function is as follows. Forms part of the ribosomal stalk which helps the ribosome interact with GTP-bound translation factors. Is thus essential for accurate translation. The chain is Large ribosomal subunit protein bL12 from Streptococcus agalactiae serotype V (strain ATCC BAA-611 / 2603 V/R).